A 1218-amino-acid chain; its full sequence is MYIKQVIIQGFRSYRDQTIVDPFSSKHNVIVGRNGSGKSNFFYAIQFVLSDEFSHLRPEQRLALLHEGTGPRVISAFVEIIFDNSDNRLPIDKEEVSLRRVIGAKKDQYFLDKKMVTKNDVMNLLESAGFSRSNPYYIVKQGKINQMATAPDSQRLKLLREVAGTRVYDERKEESISLMKETEGKREKINELLKYIEERLHTLEEEKEELAQYQKWDKMRRALEYTIYNQELNETRAKLDELSAKRETSGEKSRQLRDAQQDARDKMEDIERQVRELKTKISAMKEEKEQLSAERQEQIKQRTKLELKAKDLQDELAGNSEQRKRLLKERQKLLEKIEEKQKELAETEPKFNSVKEKEERGIARLAQATQERTDLYAKQGRGSQFTSKEERDKWIKKELKSLDQAINDKKRQIAAIHKDLEDTEANKEKNLEQYNKLDQDLNEVKARVEELDRKYYEVKNKKDELQSERNYLWREENAEQQALAAKREDLEKKQQLLRAATGKAILNGIDSINKVLDHFRRKGINQHVQNGYHGIVMNNFECEPAFYTCVEVTAGNRLFYHIVDSDEVSTKILMEFNKMNLPGEVTFLPLNKLDVRDTAYPETNDAIPMISKLRYNPRFDKAFKHVFGKTLICRSMEVSTQLARAFTMDCITLEGDQVSHRGALTGGYYDTRKSRLELQKDVRKAEEELGELEAKLNENLRRNIERINNEIDQLMNQMQQIETQQRKFKASRDSILSEMKMLKEKRQQSEKTFMPKQRSLQSLEASLHAMESTRESLKAELGTDLLSQLSLEDQKRVDALNDEIRQLQQENRQLLNERIKLEGIITRVETYLNENLRKRLDQVEQELNELRETEGGTVLTATTSELEAINKRVKDTMARSEDLDNSIDKTEAGIKELQKSMERWKNMEKEHMDAINHDTKELEKMTNRQGMLLKKKEECMKKIRELGSLPQEAFEKYQTLSLKQLFRKLEQCNTELKKYSHVNKKALDQFVNFSEQKEKLIKRQEELDRGYKSIMELMNVLELRKYEAIQLTFKQVSKNFSEVFQKLVPGGKATLVMKKRRXERQSGLRMKEKGVVKGERGSGPQSSVPSVDQFTGVGIRVSFTGKQGEMREMQQLSGGQKSLVALALIFAIQKCDPAPFYLFDEIDQALDAQHRKAVSDMIMELAVHAQFITTTFRPELLESADKFYGVKFRNKVSHIDVITAEMAKDFVEDDTTHG.

32–39 lines the ATP pocket; the sequence is GRNGSGKS. 3 positions are modified to N6-acetyllysine: K105, K106, and K140. 2 coiled-coil regions span residues 179–350 and 393–503; these read MKET…TEPK and KWIK…ATGK. A disordered region spans residues 242 to 268; it reads LSAKRETSGEKSRQLRDAQQDARDKME. The SMC hinge domain maps to 530-642; sequence NGYHGIVMNN…CRSMEVSTQL (113 aa). Coiled-coil stretches lie at residues 669–916 and 958–989; these read YDTR…DAIN and QTLSLKQLFRKLEQCNTELKKYSHVNKKALDQ. T783 is modified (phosphothreonine). A phosphoserine mark is found at S787 and S886. Phosphoserine is present on S1013. Over residues 1067-1080 the composition is skewed to basic and acidic residues; sequence GLRMKEKGVVKGER. The interval 1067–1089 is disordered; sequence GLRMKEKGVVKGERGSGPQSSVP. N6-acetyllysine is present on K1191.

Belongs to the SMC family. SMC3 subfamily. Forms a heterodimer with SMC1A or SMC1B in cohesin complexes. Cohesin complexes are composed of the SMC1 (SMC1A or meiosis-specific SMC1B) and SMC3 heterodimer attached via their SMC hinge domain, RAD21 which link them, and one STAG protein (STAG1, STAG2 or STAG3), which interacts with RAD21. Also found in meiosis-specific cohesin complexes. Found in a complex with SMC1A, CDCA5 and RAD21, PDS5A/SCC-112 and PDS5B/APRIN. Interacts with MXI1, MXD3 and MXD4. Interacts with NUMA1, and forms a ternary complex with KIF3B and KIFAP3, suggesting a function in tethering the chromosomes to the spindle pole and a function in chromosome movement. Interacts with PDS5A and WAPL; regulated by SMC3 acetylation. Interacts (via SMC hinge domain) with KIAA1328 (via N- and C-terminal domains). Interacts with DDX11, SYCP2 and STAG3. The cohesin complex interacts with the cohesin loading complex subunits NIPBL/Scc2 (via HEAT repeats) and MAU2/Scc4. NIPBL directly contacts all members of the complex, RAD21, SMC1A/B, SMC3 and STAG1. Interacts with RPGR. Interacts with the NuRD complex component HDAC2; the interaction is direct. In terms of processing, phosphorylated at Ser-1082 in a SPO11-dependent manner. Acetylation at Lys-105 and Lys-106 by ESCO1 is important for genome stability and S phase sister chromatid cohesion. Regulated by DSCC1, it is required for processive DNA synthesis, coupling sister chromatid cohesion establishment during S phase to DNA replication. Deacetylation by HDAC8, regulates release of the cohesin complex from chromatin. Post-translationally, ubiquitinated by the DCX(DCAF15) complex, leading to its degradation.

It is found in the nucleus. It localises to the chromosome. Its subcellular location is the centromere. Its function is as follows. Central component of cohesin, a complex required for chromosome cohesion during the cell cycle. The cohesin complex may form a large proteinaceous ring within which sister chromatids can be trapped. At anaphase, the complex is cleaved and dissociates from chromatin, allowing sister chromatids to segregate. Cohesion is coupled to DNA replication and is involved in DNA repair. The cohesin complex also plays an important role in spindle pole assembly during mitosis and in chromosomes movement. The sequence is that of Structural maintenance of chromosomes protein 3 (SMC3) from Bos taurus (Bovine).